We begin with the raw amino-acid sequence, 562 residues long: SPI-1 type 3 secretion system secretin (562 aa).

A signal peptide spans 1–24; that stretch reads MKTHILLARVLACAALVLVTPGYS.

This sequence belongs to the bacterial secretin family. T3SS SctC subfamily. As to quaternary structure, the core secretion machinery of the T3SS is composed of approximately 20 different proteins, including cytoplasmic components, a base, an export apparatus and a needle. This subunit is part of the base, which anchors the injectisome in the bacterial cell envelope. Forms a stable homooligomeric complex. The complex is composed of 15 subunits.

It is found in the cell outer membrane. Its function is as follows. Component of the type III secretion system (T3SS), also called injectisome, which is used to inject bacterial effector proteins into eukaryotic host cells. Forms a ring-shaped multimeric structure with an apparent central pore in the outer membrane. The polypeptide is SPI-1 type 3 secretion system secretin (Salmonella typhimurium (strain LT2 / SGSC1412 / ATCC 700720)).